The chain runs to 306 residues: 4-hydroxy-tetrahydrodipicolinate synthase (306 aa).

Residue T46 participates in pyruvate binding. Residue Y134 is the Proton donor/acceptor of the active site. K162 acts as the Schiff-base intermediate with substrate in catalysis. V204 provides a ligand contact to pyruvate.

The protein belongs to the DapA family. In terms of assembly, homotetramer; dimer of dimers.

It is found in the cytoplasm. The catalysed reaction is L-aspartate 4-semialdehyde + pyruvate = (2S,4S)-4-hydroxy-2,3,4,5-tetrahydrodipicolinate + H2O + H(+). It functions in the pathway amino-acid biosynthesis; L-lysine biosynthesis via DAP pathway; (S)-tetrahydrodipicolinate from L-aspartate: step 3/4. Its function is as follows. Catalyzes the condensation of (S)-aspartate-beta-semialdehyde [(S)-ASA] and pyruvate to 4-hydroxy-tetrahydrodipicolinate (HTPA). The sequence is that of 4-hydroxy-tetrahydrodipicolinate synthase from Synechococcus sp. (strain JA-2-3B'a(2-13)) (Cyanobacteria bacterium Yellowstone B-Prime).